The primary structure comprises 75 residues: Protein RALF-like 9 (75 aa).

The N-terminal stretch at 1–28 is a signal peptide; sequence MGMSKSIKVILSLALVVFLALAATKVEA. 2 disulfides stabilise this stretch: Cys-46–Cys-54 and Cys-66–Cys-72.

The protein belongs to the plant rapid alkalinization factor (RALF) family.

It is found in the secreted. Functionally, cell signaling peptide that may regulate plant stress, growth, and development. Mediates a rapid alkalinization of extracellular space by mediating a transient increase in the cytoplasmic Ca(2+) concentration leading to a calcium-dependent signaling events through a cell surface receptor and a concomitant activation of some intracellular mitogen-activated protein kinases. In Arabidopsis thaliana (Mouse-ear cress), this protein is Protein RALF-like 9 (RALFL9).